The chain runs to 454 residues: Putative tyrosine kinase 36 (454 aa).

Residues 80-88 (LGSGSFGKV) and lysine 98 contribute to the ATP site. Aspartate 192 serves as the catalytic Proton acceptor.

This sequence belongs to the protein kinase superfamily. Tyr protein kinase family.

The enzyme catalyses L-tyrosyl-[protein] + ATP = O-phospho-L-tyrosyl-[protein] + ADP + H(+). The polypeptide is Putative tyrosine kinase 36 (36) (Alcelaphine herpesvirus 1 (strain C500) (AlHV-1)).